The primary structure comprises 363 residues: Mitogen-activated protein kinase kinase 2 (363 aa).

The residue at position 56 (Ser-56) is a Phosphoserine. One can recognise a Protein kinase domain in the interval 70–330 (LDMVKVIGKG…AKELMEHPFL (261 aa)). ATP contacts are provided by residues 76–84 (IGKGSSGVV) and Lys-99. Catalysis depends on Asp-192, which acts as the Proton acceptor. Phosphothreonine occurs at positions 220, 226, and 230.

This sequence belongs to the protein kinase superfamily. STE Ser/Thr protein kinase family. MAP kinase kinase subfamily. Interacts with MEKK1, MPK4 and MPK6. May form a ternary complex composed of MEKK1 and MKK1/MKK2 and MPK4. Interacts with MPK10 and MPK11. Interacts with MAPKKK5 mainly in the cytosol. Post-translationally, phosphorylation at Thr-220 and Thr-226 by MAP kinase kinase kinases positively regulates kinase activity. Phosphorylated by MEKK1 in response to cold. Phosphorylated by MAPKKK5.

It carries out the reaction L-seryl-[protein] + ATP = O-phospho-L-seryl-[protein] + ADP + H(+). It catalyses the reaction L-threonyl-[protein] + ATP = O-phospho-L-threonyl-[protein] + ADP + H(+). The catalysed reaction is L-tyrosyl-[protein] + ATP = O-phospho-L-tyrosyl-[protein] + ADP + H(+). Its activity is regulated as follows. Activated in response to cold and salt stresses through serine and threonine phosphorylation by MEKK1. Its function is as follows. MEKK1, MKK1/MKK2 and MPK4 function in a signaling pathway that modulates the expression of genes responding to biotic and abiotic stresses and also plays an important role in pathogen defense by negatively regulating innate immunity. Plays a role in abiotic stress tolerance and plant disease resistance through activation of MPK4 and MPK6 by phosphorylation. Acts redundantly with MKK1. This is Mitogen-activated protein kinase kinase 2 (MKK2) from Arabidopsis thaliana (Mouse-ear cress).